Consider the following 181-residue polypeptide: Large ribosomal subunit protein uL5c (181 aa).

The protein belongs to the universal ribosomal protein uL5 family. In terms of assembly, part of the 50S ribosomal subunit; contacts the 5S rRNA.

Its subcellular location is the plastid. It localises to the chloroplast. Functionally, binds 5S rRNA, forms part of the central protuberance of the 50S subunit. This is Large ribosomal subunit protein uL5c (rpl5) from Porphyra purpurea (Red seaweed).